Reading from the N-terminus, the 223-residue chain is Urease accessory protein UreF (223 aa).

The protein belongs to the UreF family. In terms of assembly, ureD, UreF and UreG form a complex that acts as a GTP-hydrolysis-dependent molecular chaperone, activating the urease apoprotein by helping to assemble the nickel containing metallocenter of UreC. The UreE protein probably delivers the nickel.

The protein localises to the cytoplasm. Required for maturation of urease via the functional incorporation of the urease nickel metallocenter. This is Urease accessory protein UreF from Rhizobium etli (strain ATCC 51251 / DSM 11541 / JCM 21823 / NBRC 15573 / CFN 42).